The sequence spans 439 residues: Microfibrillar-associated protein 1A (439 aa).

The segment at 1-200 (MSVPSALMKQ…SEDEMEPRLK (200 aa)) is disordered. Serine 2 is modified (N-acetylserine). Basic and acidic residues predominate over residues 23–34 (RNEKGEISMEKV). Phosphoserine occurs at positions 52 and 53. A compositionally biased stretch (basic and acidic residues) spans 61–70 (QFIKKAKEQE). Lysine 67 is covalently cross-linked (Glycyl lysine isopeptide (Lys-Gly) (interchain with G-Cter in SUMO2)). Positions 71–81 (AEPEEQEEDSS) are enriched in acidic residues. A phosphoserine mark is found at serine 94, serine 116, serine 118, serine 132, and serine 133. Composition is skewed to acidic residues over residues 112–122 (VVGESDSEVEG) and 131–144 (DSSEEEEEEIDDEE). A compositionally biased stretch (basic and acidic residues) spans 145 to 163 (IERRRGMMRQRAQERKNEE). Acidic residues predominate over residues 178-195 (ESESESEYEEYTDSEDEM). Residue lysine 249 forms a Glycyl lysine isopeptide (Lys-Gly) (interchain with G-Cter in SUMO2) linkage. Threonine 267 is subject to Phosphothreonine. Lysine 357 participates in a covalent cross-link: Glycyl lysine isopeptide (Lys-Gly) (interchain with G-Cter in SUMO2). At serine 361 the chain carries Phosphoserine. Residues lysine 371, lysine 381, lysine 415, and lysine 418 each participate in a glycyl lysine isopeptide (Lys-Gly) (interchain with G-Cter in SUMO2) cross-link. Position 432 is a phosphoserine (serine 432).

The protein belongs to the MFAP1 family. Component of the spliceosome B complex. Interacts with PRPF38A (via N-terminal interaction domain).

Its subcellular location is the nucleus. Involved in pre-mRNA splicing as a component of the spliceosome. The polypeptide is Microfibrillar-associated protein 1A (Mus musculus (Mouse)).